Reading from the N-terminus, the 774-residue chain is Polyribonucleotide nucleotidyltransferase (774 aa).

Mg(2+)-binding residues include aspartate 485 and aspartate 491. The region spanning 552 to 611 (PRIETMSVPKDKIRDIIGTGGKIIREIVATTGAKVDIDDDGTVKISSSDTAQIEAARNWI) is the KH domain. The region spanning 621–689 (GKIYTGKVVN…NRGKVRLSMR (69 aa)) is the S1 motif domain. Residues 689-774 (RVVDQETGEE…APAFLTRDDD (86 aa)) form a disordered region. Positions 700-755 (PDTRPPREERPRGDRGDRGDRGPRRDGDRRREGGDRGPRRDRGDRGDRPRRERSEG) are enriched in basic and acidic residues.

This sequence belongs to the polyribonucleotide nucleotidyltransferase family. It depends on Mg(2+) as a cofactor.

It localises to the cytoplasm. It catalyses the reaction RNA(n+1) + phosphate = RNA(n) + a ribonucleoside 5'-diphosphate. Involved in mRNA degradation. Catalyzes the phosphorolysis of single-stranded polyribonucleotides processively in the 3'- to 5'-direction. The chain is Polyribonucleotide nucleotidyltransferase from Rhizorhabdus wittichii (strain DSM 6014 / CCUG 31198 / JCM 15750 / NBRC 105917 / EY 4224 / RW1) (Sphingomonas wittichii).